Reading from the N-terminus, the 244-residue chain is Protein pendolino (244 aa).

The 157-residue stretch at 20–176 (QQEYKILAEY…VQENIKESKE (157 aa)) folds into the UBC core domain.

It belongs to the ubiquitin-conjugating enzyme family. FTS subfamily. Interacts (via N-terminus) with cav/HOAP (via N-terminus); the interaction is direct. Probably interacts (via N-terminus and UBC domain) with ver and moi.

The protein localises to the nucleus. The protein resides in the nucleolus. It localises to the chromosome. Its function is as follows. Required for efficient DNA replication, probably through involvement in telomere replication. May have a role in telomere capping of heterochromatic chromosome ends. The polypeptide is Protein pendolino (Drosophila melanogaster (Fruit fly)).